Reading from the N-terminus, the 306-residue chain is Recombination-associated protein RdgC (306 aa).

This sequence belongs to the RdgC family.

The protein resides in the cytoplasm. It localises to the nucleoid. Functionally, may be involved in recombination. In Pseudomonas paraeruginosa (strain DSM 24068 / PA7) (Pseudomonas aeruginosa (strain PA7)), this protein is Recombination-associated protein RdgC.